The primary structure comprises 389 residues: GTPase Obg (389 aa).

Residues 1–159 (MKFVDEAKIL…REVLLELMLL (159 aa)) form the Obg domain. The OBG-type G domain occupies 160-333 (ADVGMLGMPN…LCWDIMEFLK (174 aa)). Residues 166–173 (GMPNAGKS), 191–195 (FTTLV), 213–216 (DIPG), 283–286 (NKVD), and 314–316 (AAI) contribute to the GTP site. Residues Ser173 and Thr193 each contribute to the Mg(2+) site. The disordered stretch occupies residues 362 to 389 (QLENPDLEDDDEDWDEEDDDGVEFIYQR). Positions 364 to 383 (ENPDLEDDDEDWDEEDDDGV) are enriched in acidic residues.

The protein belongs to the TRAFAC class OBG-HflX-like GTPase superfamily. OBG GTPase family. As to quaternary structure, monomer. Mg(2+) serves as cofactor.

It localises to the cytoplasm. Its function is as follows. An essential GTPase which binds GTP, GDP and possibly (p)ppGpp with moderate affinity, with high nucleotide exchange rates and a fairly low GTP hydrolysis rate. Plays a role in control of the cell cycle, stress response, ribosome biogenesis and in those bacteria that undergo differentiation, in morphogenesis control. The polypeptide is GTPase Obg (Proteus mirabilis (strain HI4320)).